A 585-amino-acid polypeptide reads, in one-letter code: SLAIN motif-containing protein-like (585 aa).

Disordered stretches follow at residues methionine 1 to threonine 34, asparagine 55 to glutamate 125, glutamine 324 to cysteine 365, proline 402 to glutamine 476, and glycine 492 to tyrosine 585. Positions glycine 68–asparagine 83 are enriched in polar residues. A compositionally biased stretch (low complexity) spans alanine 327–arginine 345. Over residues glutamine 351–cysteine 365 the composition is skewed to acidic residues. 3 stretches are compositionally biased toward polar residues: residues proline 425–arginine 434, asparagine 441–glutamine 476, and alanine 549–serine 563. Residues leucine 575–tyrosine 585 are compositionally biased toward basic and acidic residues.

This sequence belongs to the SLAIN motif-containing family.

The polypeptide is SLAIN motif-containing protein-like (Danio rerio (Zebrafish)).